Consider the following 56-residue polypeptide: Small ribosomal subunit protein bS21 (56 aa).

This sequence belongs to the bacterial ribosomal protein bS21 family.

This Synechococcus sp. (strain RCC307) protein is Small ribosomal subunit protein bS21.